Here is a 592-residue protein sequence, read N- to C-terminus: A-type ATP synthase subunit A (592 aa).

ATP is bound at residue Gly-233 to Thr-240.

It belongs to the ATPase alpha/beta chains family. In terms of assembly, has multiple subunits with at least A(3), B(3), C, D, E, F, H, I and proteolipid K(x).

The protein resides in the cell membrane. The enzyme catalyses ATP + H2O + 4 H(+)(in) = ADP + phosphate + 5 H(+)(out). Component of the A-type ATP synthase that produces ATP from ADP in the presence of a proton gradient across the membrane. The A chain is the catalytic subunit. In Saccharolobus islandicus (strain Y.N.15.51 / Yellowstone #2) (Sulfolobus islandicus), this protein is A-type ATP synthase subunit A.